Consider the following 489-residue polypeptide: Glycogen synthase (489 aa).

R20 is a binding site for ADP-alpha-D-glucose.

The protein belongs to the glycosyltransferase 1 family. Bacterial/plant glycogen synthase subfamily.

It catalyses the reaction [(1-&gt;4)-alpha-D-glucosyl](n) + ADP-alpha-D-glucose = [(1-&gt;4)-alpha-D-glucosyl](n+1) + ADP + H(+). It participates in glycan biosynthesis; glycogen biosynthesis. Functionally, synthesizes alpha-1,4-glucan chains using ADP-glucose. This chain is Glycogen synthase, found in Chlorobium luteolum (strain DSM 273 / BCRC 81028 / 2530) (Pelodictyon luteolum).